Here is a 110-residue protein sequence, read N- to C-terminus: UPF0060 membrane protein Psyc_0916 (110 aa).

A run of 4 helical transmembrane segments spans residues 7 to 27, 33 to 53, 63 to 83, and 87 to 107; these read VGLF…PYLW, SIWL…LLSL, AAYG…VNGI, and TWDI…MFAP.

The protein belongs to the UPF0060 family.

Its subcellular location is the cell inner membrane. The sequence is that of UPF0060 membrane protein Psyc_0916 from Psychrobacter arcticus (strain DSM 17307 / VKM B-2377 / 273-4).